A 230-amino-acid polypeptide reads, in one-letter code: RNA chaperone ProQ (230 aa).

Residues 106 to 181 (AKARVQAQRA…EERHTPVSDI (76 aa)) are disordered. Residues 146–155 (RRKDNAERKP) show a composition bias toward basic and acidic residues. Over residues 158-167 (AKPAAAAKPS) the composition is skewed to low complexity.

This sequence belongs to the ProQ family.

Its subcellular location is the cytoplasm. RNA chaperone with significant RNA binding, RNA strand exchange and RNA duplexing activities. May regulate ProP activity through an RNA-based, post-transcriptional mechanism. The protein is RNA chaperone ProQ of Cronobacter sakazakii (strain ATCC BAA-894) (Enterobacter sakazakii).